Reading from the N-terminus, the 368-residue chain is DNA replication and repair protein RecF (368 aa).

Gly30–Thr37 is an ATP binding site.

This sequence belongs to the RecF family.

It is found in the cytoplasm. The RecF protein is involved in DNA metabolism; it is required for DNA replication and normal SOS inducibility. RecF binds preferentially to single-stranded, linear DNA. It also seems to bind ATP. This Streptococcus pyogenes serotype M49 (strain NZ131) protein is DNA replication and repair protein RecF.